Consider the following 172-residue polypeptide: Trypsin inhibitor DE-3 (172 aa).

2 disulfides stabilise this stretch: C39–C83 and C132–C139.

It belongs to the protease inhibitor I3 (leguminous Kunitz-type inhibitor) family.

Inhibition of trypsin. The polypeptide is Trypsin inhibitor DE-3 (Erythrina variegata (Indian coral tree)).